Reading from the N-terminus, the 268-residue chain is Tetraspanin-5 (268 aa).

At 1–17 the chain is on the cytoplasmic side; that stretch reads MSGKHYKGPEVSCCIKY. A helical membrane pass occupies residues 18–38; the sequence is FIFGFNVIFWFLGIAFLGIGL. The Extracellular segment spans residues 39–61; sequence WAWNEKGVLSNISSITDLGGFDP. An N-linked (GlcNAc...) asparagine glycan is attached at asparagine 49. Residues 62–82 traverse the membrane as a helical segment; that stretch reads VWLFLVVGGVMFILGFAGCIG. Residues 83–92 are Cytoplasmic-facing; that stretch reads ALRENTFLLK. The helical transmembrane segment at 93–113 threads the bilayer; the sequence is FFSVFLGIIFFLELTAGVLAF. The Extracellular portion of the chain corresponds to 114 to 232; sequence VFKDWIKDQL…PQFEKWLQDN (119 aa). 4 disulfides stabilise this stretch: cysteine 153–cysteine 221, cysteine 154–cysteine 186, cysteine 170–cysteine 180, and cysteine 187–cysteine 200. 2 N-linked (GlcNAc...) asparagine glycosylation sites follow: asparagine 169 and asparagine 174. Asparagine 232 carries N-linked (GlcNAc...) asparagine glycosylation. The chain crosses the membrane as a helical span at residues 233–253; the sequence is LTIVAGIFIGIALLQIFGICL. The Cytoplasmic segment spans residues 254-268; sequence AQNLVSDIEAVRASW.

The protein belongs to the tetraspanin (TM4SF) family. In terms of assembly, interacts with ADAM10; the interaction influences ADAM10 substrate specificity, endocytosis and turnover. In terms of processing, palmitoylated.

It localises to the cell membrane. In terms of biological role, part of TspanC8 subgroup, composed of 6 members that interact with the transmembrane metalloprotease ADAM10. This interaction is required for ADAM10 exit from the endoplasmic reticulum and for enzymatic maturation and trafficking to the cell surface as well as substrate specificity. Different TspanC8/ADAM10 complexes have distinct substrates. Promotes ADAM10-mediated cleavage of CD44. Seems to regulate VE-cadherin expression in endothelial cells probably through interaction with ADAM10, promoting leukocyte transmigration. This chain is Tetraspanin-5 (TSPAN5), found in Bos taurus (Bovine).